The primary structure comprises 313 residues: Homoserine O-succinyltransferase (313 aa).

The active-site Acyl-thioester intermediate is C142. The substrate site is built by K163 and S192. H235 acts as the Proton acceptor in catalysis. Residue E237 is part of the active site. R249 is a binding site for substrate.

The protein belongs to the MetA family.

Its subcellular location is the cytoplasm. It catalyses the reaction L-homoserine + succinyl-CoA = O-succinyl-L-homoserine + CoA. The protein operates within amino-acid biosynthesis; L-methionine biosynthesis via de novo pathway; O-succinyl-L-homoserine from L-homoserine: step 1/1. In terms of biological role, transfers a succinyl group from succinyl-CoA to L-homoserine, forming succinyl-L-homoserine. The protein is Homoserine O-succinyltransferase of Vibrio atlanticus (strain LGP32) (Vibrio splendidus (strain Mel32)).